A 408-amino-acid polypeptide reads, in one-letter code: Tryptophan synthase beta chain (408 aa).

An N6-(pyridoxal phosphate)lysine modification is found at Lys103.

The protein belongs to the TrpB family. Tetramer of two alpha and two beta chains. Requires pyridoxal 5'-phosphate as cofactor.

The catalysed reaction is (1S,2R)-1-C-(indol-3-yl)glycerol 3-phosphate + L-serine = D-glyceraldehyde 3-phosphate + L-tryptophan + H2O. It functions in the pathway amino-acid biosynthesis; L-tryptophan biosynthesis; L-tryptophan from chorismate: step 5/5. The beta subunit is responsible for the synthesis of L-tryptophan from indole and L-serine. The polypeptide is Tryptophan synthase beta chain (Koribacter versatilis (strain Ellin345)).